A 429-amino-acid polypeptide reads, in one-letter code: Glutamyl-tRNA reductase (429 aa).

Substrate contacts are provided by residues 56–59 (TCNR), Ser-119, 124–126 (EPQ), and Gln-130. The Nucleophile role is filled by Cys-57. 199 to 204 (GAGEMI) is a binding site for NADP(+).

It belongs to the glutamyl-tRNA reductase family. As to quaternary structure, homodimer.

The enzyme catalyses (S)-4-amino-5-oxopentanoate + tRNA(Glu) + NADP(+) = L-glutamyl-tRNA(Glu) + NADPH + H(+). It functions in the pathway porphyrin-containing compound metabolism; protoporphyrin-IX biosynthesis; 5-aminolevulinate from L-glutamyl-tRNA(Glu): step 1/2. Catalyzes the NADPH-dependent reduction of glutamyl-tRNA(Glu) to glutamate 1-semialdehyde (GSA). This Herminiimonas arsenicoxydans protein is Glutamyl-tRNA reductase.